The chain runs to 197 residues: Proteinase inhibitor type-2 (197 aa).

A signal peptide spans 1-24 (MAVHKVSFVAHLLVLGMFLLLVDA). 3 repeat units span residues 24-80 (AKAC…DPKN), 81-140 (PNVC…DEPK), and 141-196 (SCTT…PQSA). Disulfide bonds link C27-C115, C31-C111, C39-C121, C51-C88, C54-C72, C55-C84, C61-C97, and C114-C132.

It belongs to the protease inhibitor I20 (potato type II proteinase inhibitor) family.

This chain is Proteinase inhibitor type-2, found in Nicotiana tabacum (Common tobacco).